We begin with the raw amino-acid sequence, 867 residues long: Dynamin-1 (867 aa).

Positions 28–294 (DLDLPQIAVV…LTNHIRDTLP (267 aa)) constitute a Dynamin-type G domain. The interval 38–45 (GGQSAGKS) is G1 motif. Residues serine 41, glycine 43, lysine 44, serine 45, serine 46, arginine 59, and glycine 60 each coordinate GDP. Positions 64–66 (VTR) are G2 motif. Phosphotyrosine is present on tyrosine 80. Tyrosine 125 bears the 3'-nitrotyrosine; alternate mark. Residue tyrosine 125 is modified to Phosphotyrosine; alternate. A G3 motif region spans residues 136-139 (DLPG). A G4 motif region spans residues 205-208 (TKLD). The GDP site is built by lysine 206, aspartate 208, aspartate 211, asparagine 236, arginine 237, and glutamine 239. Positions 235–238 (VNRS) are G5 motif. Phosphoserine is present on residues serine 306 and serine 347. Tyrosine 354 is modified (phosphotyrosine). Residue serine 512 is modified to Phosphoserine. Residues 515–625 (QDEILVIRKG…WKASFLRAGV (111 aa)) enclose the PH domain. Residues 659 to 750 (VETIRNLVDS…IIGDINTTTV (92 aa)) form the GED domain. A disordered region spans residues 767 to 867 (SVPAGRRSPT…HENRAGKARL (101 aa)). A phosphoserine mark is found at serine 774 and serine 778. Arginine 796 is modified (omega-N-methylarginine). A Phosphoserine modification is found at serine 822. Residues 825-843 (PFGPPPQVPSRPNRAPPGV) are compositionally biased toward pro residues. Residues glycine 847, leucine 851, and lysine 857 each carry the phosphoserine modification. Residues 856 to 867 (GKHENRAGKARL) are compositionally biased toward basic and acidic residues.

It belongs to the TRAFAC class dynamin-like GTPase superfamily. Dynamin/Fzo/YdjA family. Homodimer; homodimerization is mediated by the dynamin-type G domain which promotes assembly-stimulated GTPase activity. Homo-tetramer formed from two dimers in the absence of lipid. Oligomerizes into a helical polymer that self-assembles around the vesicle membrane, when associated to the menbrane through lipid binding. Interacts (via C-terminal proline-rich domain (PRD)) with SNX9 (via SH3 domain); this interaction allows regulation of DNM1 self-assembly during late stages of endocytic vesicle formation and supports DNM1's early functions in accelerating clathrin-coated pits (CCPs) maturation in non neuronals cell. Interacts (via C-terminal proline-rich domain (PRD)) with MYO1E (via SH3 domain); this interaction regulates receptor-mediated endocytosis. Interacts with SNX33 (via SH3 domain); this interaction decreases DNM1-dependent endocytosis. Interacts with DIAPH1. Interacts with GRB2 (via SH3 domain); this interaction mediates disassembly of DNM1 polymers, therefore modulates self-assembly. Forms a complex with BIN1 (via SH3 domain) and SH3GL2 (via SH3 domain). Forms a complex with SH3GL2 (via SH3 domain) and AMPH (via SH3 domain). Forms a complex with SH3GL2 (via SH3 domain) and SYNJ1. Interacts (via C-terminal proline-rich domain (PRD)) with SYT1; this interaction facilitates vesicle fission during clathrin-mediated endocytosis (CME). Interacts (via C-terminal proline-rich domain (PRD)) with PLCG1 (via SH3 domain); this interaction stimulates the release of GDP from DNM1 and enhances DNM1-dependent endocytosis. Interacts with SNPH; this interaction inhibits the binding of DNM1 to AMPH and DNM1-receptor-mediated endocytosis. Interacts with CAV1. Interacts with SH3GLB1 (via SH3 domain). Interacts with PACSIN1 (via SH3 domain), PACSIN2 (via SH3 domain) and PACSIN3 (via SH3 domain). Interacts with UNC119; this interaction decreases DNM1's GTPase activity and affects DNM1's interaction with AMPH. Interacts with AMPH. Interacts (GTP-bound form) with DNAJC6; this interaction allows clathrin-coated vesicle (CCV) formation at the plasma membrane. Post-translationally, phosphorylation at Ser-774 by GSK3B/GSK3-beta leads to inactivation of receptor-mediated endocytosis in non-neuronal cells. Dephosphorylation at Ser-774, through the EGFR downstream signaling, leads to activation and regulates early stages of clathrin-mediated endocytosis (CME). Phosphorylated on Tyr in response to EGF stimulation in cells expressing truncated EGFR. Phosphorylated by CDK5 leading to synaptic vesicle endocytosis (SVE) activation. In terms of tissue distribution, expressed exclusively in the brain.

The protein resides in the cell membrane. Its subcellular location is the membrane. It localises to the clathrin-coated pit. It is found in the cytoplasmic vesicle. The protein localises to the presynapse. The protein resides in the secretory vesicle. Its subcellular location is the chromaffin granule. It carries out the reaction GTP + H2O = GDP + phosphate + H(+). Functionally, catalyzes the hydrolysis of GTP and utilizes this energy to mediate vesicle scission and participates in many forms of endocytosis, such as clathrin-mediated endocytosis or synaptic vesicle endocytosis as well as rapid endocytosis (RE). Associates to the membrane, through lipid binding, and self-assembles into rings and stacks of interconnected rings through oligomerization to form a helical polymer around the vesicle membrane leading to constriction of invaginated coated pits around their necks. Self-assembly of the helical polymer induces membrane tubules narrowing until the polymer reaches a length sufficient to trigger GTP hydrolysis. Depending on the curvature imposed on the tubules, membrane detachment from the helical polymer upon GTP hydrolysis can cause spontaneous hemifission followed by complete fission. May play a role in regulating early stages of clathrin-mediated endocytosis in non-neuronal cells through its activation by dephosphorylation via the signaling downstream of EGFR. Controls vesicle size at a step before fission, during formation of membrane pits, at hippocampal synapses. Controls plastic adaptation of the synaptic vesicle recycling machinery to high levels of activity. Mediates rapid endocytosis (RE), a Ca(2+)-dependent and clathrin- and K(+)-independent process in chromaffin cells. Microtubule-associated force-producing protein involved in producing microtubule bundles and able to bind and hydrolyze GTP. Through its interaction with DNAJC6, acts during the early steps of clathrin-coated vesicle (CCV) formation. This is Dynamin-1 from Mus musculus (Mouse).